The sequence spans 419 residues: Phosphoglycerate kinase (419 aa).

Positions 24, 25, 26, 27, 40, 63, 64, 66, 67, 122, 123, 169, and 170 each coordinate (2R)-3-phosphoglycerate. Residue Gly-213 participates in ADP binding. Gly-213 provides a ligand contact to CDP. Ala-214 and Lys-215 together coordinate AMP. Residue Ala-214 coordinates ATP. Ala-214 is a binding site for Mg(2+). Residues Ala-217 and Asp-218 each coordinate Mg(2+). Asp-218 is a CDP binding site. Residue Lys-219 coordinates AMP. An ATP-binding site is contributed by Lys-219. Gly-237 serves as a coordination point for ADP. A CDP-binding site is contributed by Gly-237. Residues Gly-238 and Gly-313 each coordinate AMP. The ATP site is built by Gly-238 and Gly-313. Residues Gly-338 and Phe-343 each contribute to the CDP site. Phe-343 contacts ADP. Glu-344 is an AMP binding site. The ATP site is built by Glu-344, Asp-375, and Thr-376. Residue Asp-375 coordinates Mg(2+).

This sequence belongs to the phosphoglycerate kinase family. Monomer. Mg(2+) serves as cofactor.

It carries out the reaction (2R)-3-phosphoglycerate + ATP = (2R)-3-phospho-glyceroyl phosphate + ADP. Its pathway is carbohydrate degradation; glycolysis; pyruvate from D-glyceraldehyde 3-phosphate: step 2/5. This Sterkiella nova (Ciliate) protein is Phosphoglycerate kinase (PGK).